The chain runs to 462 residues: Chromosomal replication initiator protein DnaA (462 aa).

The tract at residues 1–83 (MSLSLWQQCL…LRFEVGSKPA (83 aa)) is domain I, interacts with DnaA modulators. The tract at residues 83 to 125 (AARAHNNPVTASVSAPVAPVTRSAPMRPSWDNSPAQPELSYRS) is domain II. The tract at residues 104–125 (RSAPMRPSWDNSPAQPELSYRS) is disordered. Polar residues predominate over residues 112–125 (WDNSPAQPELSYRS). Residues 126-342 (NVNPKHTFDN…GALNRVIANA (217 aa)) form a domain III, AAA+ region region. Residues glycine 170, glycine 172, lysine 173, and threonine 174 each coordinate ATP. Residues 343-462 (NFTGRAITID…FSNLIRTLSS (120 aa)) form a domain IV, binds dsDNA region.

This sequence belongs to the DnaA family. In terms of assembly, oligomerizes as a right-handed, spiral filament on DNA at oriC.

The protein localises to the cytoplasm. Plays an essential role in the initiation and regulation of chromosomal replication. ATP-DnaA binds to the origin of replication (oriC) to initiate formation of the DNA replication initiation complex once per cell cycle. Binds the DnaA box (a 9 base pair repeat at the origin) and separates the double-stranded (ds)DNA. Forms a right-handed helical filament on oriC DNA; dsDNA binds to the exterior of the filament while single-stranded (ss)DNA is stabiized in the filament's interior. The ATP-DnaA-oriC complex binds and stabilizes one strand of the AT-rich DNA unwinding element (DUE), permitting loading of DNA polymerase. After initiation quickly degrades to an ADP-DnaA complex that is not apt for DNA replication. Binds acidic phospholipids. The polypeptide is Chromosomal replication initiator protein DnaA (Yersinia pseudotuberculosis serotype O:1b (strain IP 31758)).